A 312-amino-acid polypeptide reads, in one-letter code: Fibrinogen-like protein 1 (312 aa).

The first 22 residues, 1–22 (MAKVFSFILVTTALTMGREISA), serve as a signal peptide directing secretion. The stretch at 23 to 61 (LEDCAQEQMRLRAQVRLLETRVKQQQVKIKQLLQENEVQ) forms a coiled coil. Positions 74 to 306 (LGSKRQYADC…SVVMKIRPND (233 aa)) constitute a Fibrinogen C-terminal domain. 2 disulfides stabilise this stretch: Cys83/Cys112 and Cys248/Cys261.

Homodimer. Interacts (via the Fibrinogen C-terminal domain) with LAG3 (via Ig-like domains 1 and 2). Under normal conditions, liver-specific.

Its subcellular location is the secreted. Functionally, immune suppressive molecule that inhibits antigen-specific T-cell activation by acting as a major ligand of LAG3. Responsible for LAG3 T-cell inhibitory function. Binds LAG3 independently from MHC class II (MHC-II). Secreted by, and promotes growth of, hepatocytes. The polypeptide is Fibrinogen-like protein 1 (Homo sapiens (Human)).